A 245-amino-acid chain; its full sequence is MANKRLKKKLETKRKKSLLVSEGYSKKETKKLKGRELETVYKKKAHNRKNRERAREIANLAKQWGLSPSKYNSWKKLLPEIERIKKEQDREAPFLLIYYQDFTGETDSKFIYDFKKRNNTRSRSQITESIIGWLQNAHNKLFLGRVAIRIVPKRDVSKTNTLWRNHGYVKIYEGQGKELSKLLTAIETIMVGVYDVKERDKYLKELVAKLRSLPYEKAKKNAKEIQKIYDTKSYKKESWDNDDYY.

A Nuclear localization signal motif is present at residues 4–55 (KRLKKKLETKRKKSLLVSEGYSKKETKKLKGRELETVYKKKAHNRKNRERAR). Tyr-194 is modified (O-(5'-phospho-DNA)-tyrosine).

In terms of assembly, interacts with the DNA-binding protein P1.

The protein localises to the virion. Functionally, acts as a primer for viral genomic replication. DNA terminal protein is covalently linked to the 5'-ends of both strands of the genome through a phosphodiester bond between the beta-hydroxyl group of a tyrosine residue and the 5'-phosphate of the terminal deoxythymidylate. This protein is essential for DNA replication and is involved in the priming of DNA elongation. The chain is DNA terminal protein from Bacillus thuringiensis (Bacillus thuringiensis bacteriophage Bam35c).